We begin with the raw amino-acid sequence, 195 residues long: Pyridoxal 5'-phosphate synthase subunit PdxT (195 aa).

46 to 48 (GES) provides a ligand contact to L-glutamine. The active-site Nucleophile is C78. L-glutamine-binding positions include R105 and 133–134 (IR). Catalysis depends on charge relay system residues H169 and E171.

This sequence belongs to the glutaminase PdxT/SNO family. As to quaternary structure, in the presence of PdxS, forms a dodecamer of heterodimers. Only shows activity in the heterodimer.

It catalyses the reaction aldehydo-D-ribose 5-phosphate + D-glyceraldehyde 3-phosphate + L-glutamine = pyridoxal 5'-phosphate + L-glutamate + phosphate + 3 H2O + H(+). The catalysed reaction is L-glutamine + H2O = L-glutamate + NH4(+). It participates in cofactor biosynthesis; pyridoxal 5'-phosphate biosynthesis. Functionally, catalyzes the hydrolysis of glutamine to glutamate and ammonia as part of the biosynthesis of pyridoxal 5'-phosphate. The resulting ammonia molecule is channeled to the active site of PdxS. The chain is Pyridoxal 5'-phosphate synthase subunit PdxT from Geobacillus thermodenitrificans (strain NG80-2).